A 115-amino-acid polypeptide reads, in one-letter code: Small ribosomal subunit protein bS18c (115 aa).

The interval 91 to 115 (TNALKARTQNKDQKKEKFQINKKKK) is disordered. A compositionally biased stretch (basic and acidic residues) spans 99–109 (QNKDQKKEKFQ).

It belongs to the bacterial ribosomal protein bS18 family. In terms of assembly, part of the 30S ribosomal subunit.

The protein localises to the plastid. It localises to the chloroplast. This chain is Small ribosomal subunit protein bS18c, found in Ipomoea purpurea (Common morning glory).